Here is a 315-residue protein sequence, read N- to C-terminus: Homoserine kinase (315 aa).

Residue 97-107 coordinates ATP; the sequence is PPARGLGSSAT.

The protein belongs to the GHMP kinase family. Homoserine kinase subfamily.

It is found in the cytoplasm. The catalysed reaction is L-homoserine + ATP = O-phospho-L-homoserine + ADP + H(+). Its pathway is amino-acid biosynthesis; L-threonine biosynthesis; L-threonine from L-aspartate: step 4/5. Catalyzes the ATP-dependent phosphorylation of L-homoserine to L-homoserine phosphate. The sequence is that of Homoserine kinase from Synechococcus sp. (strain CC9902).